Consider the following 331-residue polypeptide: MQLPHYSQLKQQQCRRDRRSLALLLAFLVLTLVVSLCAGERWIWPTAWLDDAQQLFVWQLRLPRTLAVMLVGASLAMSGTVMQAVFDNPLAEPGLLGVANGAGVALVLTVLLGQGLLPVWVLSLSAIAGALLITFLLLHFARRHISNTRLLLIGIALGIICSAVMTWAVYFSTSLDLRQLMYWMMGGFSGIDWRHGWLMLTLLPLLLWLSRQGTVLNGLTLGEIQARQLGIPVYRWRTVLVLVMGVQVGLSVALAGIIAFIGLIIPHMLRLCGLTDQRYLLTGCALAGGGVLLLADTVARVALNSAELPIGVVTATQGSPWFIWLLLRNRL.

Transmembrane regions (helical) follow at residues 21-43 (LALL…ERWI), 63-85 (PRTL…MQAV), 90-112 (LAEP…TVLL), 116-138 (LLPV…FLLL), 151-173 (LLIG…YFST), 193-210 (WRHG…LWLS), and 239-261 (VLVL…IAFI).

This sequence belongs to the binding-protein-dependent transport system permease family. FecCD subfamily. In terms of assembly, the complex is composed of two ATP-binding proteins (BtuD), two transmembrane proteins (BtuC) and a solute-binding protein (BtuF).

It localises to the cell inner membrane. In terms of biological role, part of the ABC transporter complex BtuCDF involved in vitamin B12 import. Involved in the translocation of the substrate across the membrane. In Pectobacterium atrosepticum (strain SCRI 1043 / ATCC BAA-672) (Erwinia carotovora subsp. atroseptica), this protein is Vitamin B12 import system permease protein BtuC.